We begin with the raw amino-acid sequence, 383 residues long: 2-aminoethylphosphonate--pyruvate transaminase (383 aa).

N6-(pyridoxal phosphate)lysine is present on Lys192.

It belongs to the class-V pyridoxal-phosphate-dependent aminotransferase family. PhnW subfamily. In terms of assembly, homodimer. It depends on pyridoxal 5'-phosphate as a cofactor.

It carries out the reaction (2-aminoethyl)phosphonate + pyruvate = phosphonoacetaldehyde + L-alanine. Involved in phosphonate degradation. This is 2-aminoethylphosphonate--pyruvate transaminase from Rhizobium meliloti (strain 1021) (Ensifer meliloti).